The following is a 416-amino-acid chain: Enterobactin exporter EntS (416 aa).

The Cytoplasmic portion of the chain corresponds to 1–21 (MNKQSWLLNLSLLKTHPAFRA). A helical membrane pass occupies residues 22–42 (VFLARFISIVSLGLLGVAVPV). Over 43–55 (QIQIMTHSTWQVG) the chain is Periplasmic. A helical membrane pass occupies residues 56–76 (LSVTLTGGAMFVGLMVGGVLA). The Cytoplasmic segment spans residues 77-83 (DRYERKK). Residues 84 to 104 (VILLARGTCGIGFIGLCLNAL) form a helical membrane-spanning segment. At 105–109 (LPEPS) the chain is on the periplasmic side. Residues 110-130 (LLAIYLLGLWDGFFASLGVTA) form a helical membrane-spanning segment. At 131 to 156 (LLAATPALVGRENLMQAGAITMLTVR) the chain is on the cytoplasmic side. A helical membrane pass occupies residues 157–177 (LGSVISPMIGGLLLATGGVAW). Residue Asn178 is a topological domain, periplasmic. Residues 179 to 199 (YGLAAAGTFITLLPLLSLPAL) traverse the membrane as a helical segment. Topologically, residues 200 to 218 (PPPPQPREHPLKSLLAGFR) are cytoplasmic. A helical transmembrane segment spans residues 219-239 (FLLASPLVGGIALLGGLLTMA). The Periplasmic segment spans residues 240–256 (SAVRVLYPALADNWQMS). The chain crosses the membrane as a helical span at residues 257–277 (AAQIGFLYAAIPLGAAIGALT). Residues 278–287 (SGKLAHSVRP) lie on the Cytoplasmic side of the membrane. A helical membrane pass occupies residues 288–307 (GLLMLLSTLGAFLAIGLFGL). Residues 308–313 (MPMWIL) are Periplasmic-facing. A helical transmembrane segment spans residues 314–336 (GVVCLALFGWLSAVSSLLQYTML). At 337-356 (QTQTPEAMLGRINGLWTAQN) the chain is on the cytoplasmic side. A helical membrane pass occupies residues 357-377 (VTGDAIGAALLGGLGAMMTPV). Residue Ala378 is a topological domain, periplasmic. The helical transmembrane segment at 379–399 (SASASGFGLLIIGVLLLLVLV) threads the bilayer. Topologically, residues 400 to 416 (ELRRFRQTPPQVTASDS) are cytoplasmic.

The protein belongs to the major facilitator superfamily. EntS (TC 2.A.1.38) family.

The protein localises to the cell inner membrane. In terms of biological role, component of an export pathway for enterobactin. The protein is Enterobactin exporter EntS of Escherichia coli O127:H6 (strain E2348/69 / EPEC).